Reading from the N-terminus, the 179-residue chain is Large ribosomal subunit protein uL5 (179 aa).

It belongs to the universal ribosomal protein uL5 family. As to quaternary structure, part of the 50S ribosomal subunit; part of the 5S rRNA/L5/L18/L25 subcomplex. Contacts the 5S rRNA and the P site tRNA. Forms a bridge to the 30S subunit in the 70S ribosome.

Its function is as follows. This is one of the proteins that bind and probably mediate the attachment of the 5S RNA into the large ribosomal subunit, where it forms part of the central protuberance. In the 70S ribosome it contacts protein S13 of the 30S subunit (bridge B1b), connecting the 2 subunits; this bridge is implicated in subunit movement. Contacts the P site tRNA; the 5S rRNA and some of its associated proteins might help stabilize positioning of ribosome-bound tRNAs. The polypeptide is Large ribosomal subunit protein uL5 (Pseudomonas fluorescens (strain ATCC BAA-477 / NRRL B-23932 / Pf-5)).